Here is a 410-residue protein sequence, read N- to C-terminus: Argininosuccinate synthase (410 aa).

ATP-binding positions include 10-18 (AYSGGLDTS) and Ala-37. Tyr-90 and Ser-95 together coordinate L-citrulline. Gly-120 contributes to the ATP binding site. L-aspartate-binding residues include Thr-122, Asn-126, and Asp-127. Asn-126 is an L-citrulline binding site. The L-citrulline site is built by Arg-130, Ser-182, Ser-191, Glu-267, and Tyr-279.

Belongs to the argininosuccinate synthase family. Type 1 subfamily. As to quaternary structure, homotetramer.

It localises to the cytoplasm. The enzyme catalyses L-citrulline + L-aspartate + ATP = 2-(N(omega)-L-arginino)succinate + AMP + diphosphate + H(+). Its pathway is amino-acid biosynthesis; L-arginine biosynthesis; L-arginine from L-ornithine and carbamoyl phosphate: step 2/3. The protein is Argininosuccinate synthase of Polynucleobacter necessarius subsp. necessarius (strain STIR1).